We begin with the raw amino-acid sequence, 391 residues long: Multidrug resistance protein MdtL (391 aa).

Transmembrane regions (helical) follow at residues 4–24 (FLIC…MYLV), 42–62 (IAFS…GKVA), 69–89 (PVAI…SLAE), 93–113 (LFLA…VVAF), 131–151 (LLNG…HLIM), 158–178 (SLFW…LFIL), 203–222 (FFLS…LTFV), 245–265 (ALTA…LGIF), 269–289 (TLMI…AVSP), 293–313 (VSLF…GVAM), 331–351 (LGIA…VVGI), and 356–376 (MLIG…MFVA).

This sequence belongs to the major facilitator superfamily. DHA1 family. MdtL (TC 2.A.1.2.22) subfamily.

The protein localises to the cell inner membrane. Confers resistance to chloramphenicol. In Escherichia coli O45:K1 (strain S88 / ExPEC), this protein is Multidrug resistance protein MdtL.